Here is a 309-residue protein sequence, read N- to C-terminus: tRNA pseudouridine synthase B (309 aa).

The Nucleophile role is filled by Asp52.

The protein belongs to the pseudouridine synthase TruB family. Type 1 subfamily.

The enzyme catalyses uridine(55) in tRNA = pseudouridine(55) in tRNA. In terms of biological role, responsible for synthesis of pseudouridine from uracil-55 in the psi GC loop of transfer RNAs. The chain is tRNA pseudouridine synthase B from Leptospira interrogans serogroup Icterohaemorrhagiae serovar copenhageni (strain Fiocruz L1-130).